We begin with the raw amino-acid sequence, 669 residues long: DNA ligase (669 aa).

An NAD(+)-binding site is contributed by 35-39 (DFEYD). Residues 52 to 71 (YPEWDSPDSPTHRVGSDKTE) are disordered. Residues 61-71 (PTHRVGSDKTE) are compositionally biased toward basic and acidic residues. NAD(+) is bound by residues 84–85 (SL) and E115. K117 functions as the N6-AMP-lysine intermediate in the catalytic mechanism. The NAD(+) site is built by R138, E175, K290, and K314. Zn(2+) contacts are provided by C408, C411, C426, and C432. A BRCT domain is found at 590–669 (AVSNRLAGKT…EEEFLRLIEE (80 aa)).

Belongs to the NAD-dependent DNA ligase family. LigA subfamily. Requires Mg(2+) as cofactor. Mn(2+) is required as a cofactor.

The enzyme catalyses NAD(+) + (deoxyribonucleotide)n-3'-hydroxyl + 5'-phospho-(deoxyribonucleotide)m = (deoxyribonucleotide)n+m + AMP + beta-nicotinamide D-nucleotide.. DNA ligase that catalyzes the formation of phosphodiester linkages between 5'-phosphoryl and 3'-hydroxyl groups in double-stranded DNA using NAD as a coenzyme and as the energy source for the reaction. It is essential for DNA replication and repair of damaged DNA. This is DNA ligase from Porphyromonas gingivalis (strain ATCC BAA-308 / W83).